The sequence spans 309 residues: Tagatose-6-phosphate kinase 1 (309 aa).

Belongs to the carbohydrate kinase PfkB family. LacC subfamily.

It catalyses the reaction D-tagatofuranose 6-phosphate + ATP = D-tagatofuranose 1,6-bisphosphate + ADP + H(+). The protein operates within carbohydrate metabolism; D-tagatose 6-phosphate degradation; D-glyceraldehyde 3-phosphate and glycerone phosphate from D-tagatose 6-phosphate: step 1/2. The sequence is that of Tagatose-6-phosphate kinase 1 from Streptococcus agalactiae serotype III (strain NEM316).